A 407-amino-acid polypeptide reads, in one-letter code: Imidazolonepropionase (407 aa).

The Fe(3+) site is built by histidine 74 and histidine 76. Residues histidine 74 and histidine 76 each contribute to the Zn(2+) site. 4-imidazolone-5-propanoate contacts are provided by arginine 83, tyrosine 146, and histidine 179. Tyrosine 146 lines the N-formimidoyl-L-glutamate pocket. Histidine 244 serves as a coordination point for Fe(3+). Histidine 244 is a Zn(2+) binding site. Residue glutamine 247 coordinates 4-imidazolone-5-propanoate. Aspartate 319 contributes to the Fe(3+) binding site. Aspartate 319 is a Zn(2+) binding site. Asparagine 321 and glycine 323 together coordinate N-formimidoyl-L-glutamate. Position 324 (threonine 324) interacts with 4-imidazolone-5-propanoate.

The protein belongs to the metallo-dependent hydrolases superfamily. HutI family. Zn(2+) serves as cofactor. Requires Fe(3+) as cofactor.

The protein resides in the cytoplasm. The catalysed reaction is 4-imidazolone-5-propanoate + H2O = N-formimidoyl-L-glutamate. Its pathway is amino-acid degradation; L-histidine degradation into L-glutamate; N-formimidoyl-L-glutamate from L-histidine: step 3/3. Catalyzes the hydrolytic cleavage of the carbon-nitrogen bond in imidazolone-5-propanoate to yield N-formimidoyl-L-glutamate. It is the third step in the universal histidine degradation pathway. The polypeptide is Imidazolonepropionase (Salmonella paratyphi A (strain ATCC 9150 / SARB42)).